Here is a 239-residue protein sequence, read N- to C-terminus: BURP domain-containing protein 6 (239 aa).

The signal sequence occupies residues 1-19 (MPGAIRDLINPVSSAASAS). Positions 28–239 (FFLEKDLFPG…PQDDMLWVRN (212 aa)) constitute a BURP domain.

In terms of tissue distribution, expressed in leaves and shoot.

The polypeptide is BURP domain-containing protein 6 (BURP6) (Oryza sativa subsp. japonica (Rice)).